Consider the following 511-residue polypeptide: MQTPPTPLSSLTPHKLRLRRLGIDTYQEPVLYMHRDCRVCHSEGFEAQSRVELALGDRTIVATLNVVSGDFLAPDEAGLSEAAWRLLGAQEGDMVSPRHPAPIESLGHVRAKVYGRHLTQAAITAVIEDVTAGRYSDLQLAAFVTACAGDRLDQEETVSLTRAMVAAGERIDWGEGLVMDKHCVGGLPGNRTTMVIVPIVAACGLRMPKTSSRAITSPAGTADTMETLAPVDLDVAQIRRVVERTGGCVVWGGAVRLSPADDILIRVERPLDLDSQGQLVASILSKKVAAGSTHVLIDMPVGPTAKVRSAEAADLLGRLLGQVGQTLGLRMRVVQTDGLAPVGRGIGPALEARDVLAVLRNLATAPADLAQRSLLLAGEVLEFGGAAPAGGGLALASAVLADGRAWRKFQDICAAQGGLREPPVAAHQQAVHALRSGSVLAIDNRRLARIAKLAGAPGAACAGIDLHVRPGEFVERGQPLFTLHAATPGELAYALEYAASQAETVHVLEDA.

Belongs to the thymidine/pyrimidine-nucleoside phosphorylase family. Type 2 subfamily.

The catalysed reaction is thymidine + phosphate = 2-deoxy-alpha-D-ribose 1-phosphate + thymine. This is Putative thymidine phosphorylase from Polaromonas sp. (strain JS666 / ATCC BAA-500).